The chain runs to 108 residues: Ig kappa chain V-V region NQ5-89.4 (108 aa).

The interval 1–23 is framework-1; the sequence is DIQMTQTTSSLSASLGHRVTITC. Cysteines 23 and 88 form a disulfide. Positions 24–34 are complementarity-determining-1; that stretch reads SASQDISNYLN. Residues 35-49 form a framework-2 region; that stretch reads WYQQKPDGTVKLLIY. The segment at 50–56 is complementarity-determining-2; the sequence is YTSRLHS. The framework-3 stretch occupies residues 57–88; the sequence is GVPSRFSGSGSATDYSLTITNLQQEDXATYXC. Residues 89-97 are complementarity-determining-3; the sequence is QQGNTLPYT. The interval 98 to 107 is framework-4; sequence FGGGTKLXIK.

Functionally, anti-2-phenyl oxazolone (PHOX) Antibody. This is Ig kappa chain V-V region NQ5-89.4 from Mus musculus (Mouse).